Consider the following 82-residue polypeptide: Small ribosomal subunit protein bS16 (82 aa).

This sequence belongs to the bacterial ribosomal protein bS16 family.

This Psychromonas ingrahamii (strain DSM 17664 / CCUG 51855 / 37) protein is Small ribosomal subunit protein bS16.